Consider the following 196-residue polypeptide: Holliday junction branch migration complex subunit RuvA (196 aa).

Residues 1–63 (MINKIYGKVI…ENELKLFGFL (63 aa)) form a domain I region. Residues 64 to 139 (NSDERETFKS…KLLINNELES (76 aa)) are domain II. Residue serine 139 is a region of interest, flexible linker. The interval 139-196 (SSLFRFKELEESIVSMGFDRKIVNSKLKEAFNLVEFSNLKDSEKEQFLFKEVLKRMSN) is domain III.

It belongs to the RuvA family. As to quaternary structure, homotetramer. Forms an RuvA(8)-RuvB(12)-Holliday junction (HJ) complex. HJ DNA is sandwiched between 2 RuvA tetramers; dsDNA enters through RuvA and exits via RuvB. An RuvB hexamer assembles on each DNA strand where it exits the tetramer. Each RuvB hexamer is contacted by two RuvA subunits (via domain III) on 2 adjacent RuvB subunits; this complex drives branch migration. In the full resolvosome a probable DNA-RuvA(4)-RuvB(12)-RuvC(2) complex forms which resolves the HJ.

The protein resides in the cytoplasm. Its function is as follows. The RuvA-RuvB-RuvC complex processes Holliday junction (HJ) DNA during genetic recombination and DNA repair, while the RuvA-RuvB complex plays an important role in the rescue of blocked DNA replication forks via replication fork reversal (RFR). RuvA specifically binds to HJ cruciform DNA, conferring on it an open structure. The RuvB hexamer acts as an ATP-dependent pump, pulling dsDNA into and through the RuvAB complex. HJ branch migration allows RuvC to scan DNA until it finds its consensus sequence, where it cleaves and resolves the cruciform DNA. The sequence is that of Holliday junction branch migration complex subunit RuvA from Borreliella afzelii (strain PKo) (Borrelia afzelii).